The sequence spans 203 residues: Dephospho-CoA kinase (203 aa).

Residues 4-203 (VIGITGGIAT…EEGYIQSESE (200 aa)) enclose the DPCK domain. 12 to 17 (ATGKST) serves as a coordination point for ATP.

It belongs to the CoaE family.

The protein resides in the cytoplasm. The enzyme catalyses 3'-dephospho-CoA + ATP = ADP + CoA + H(+). Its pathway is cofactor biosynthesis; coenzyme A biosynthesis; CoA from (R)-pantothenate: step 5/5. In terms of biological role, catalyzes the phosphorylation of the 3'-hydroxyl group of dephosphocoenzyme A to form coenzyme A. This Staphylococcus epidermidis (strain ATCC 35984 / DSM 28319 / BCRC 17069 / CCUG 31568 / BM 3577 / RP62A) protein is Dephospho-CoA kinase.